The following is a 604-amino-acid chain: Tyrosine-protein kinase transforming protein erbB (604 aa).

In terms of domain architecture, Protein kinase spans 132 to 399; that stretch reads FKKVKVLGSG…KMARDPPRYL (268 aa). ATP-binding positions include 138–146 and lysine 165; that span reads LGSGAFGTI. Residue aspartate 257 is the Proton acceptor of the active site.

It belongs to the protein kinase superfamily. Tyr protein kinase family. EGF receptor subfamily.

The enzyme catalyses L-tyrosyl-[protein] + ATP = O-phospho-L-tyrosyl-[protein] + ADP + H(+). In terms of biological role, the v-erbB oncogene transforms avian fibroblasts and erythroblasts in culture and induces sarcomas and erythroleukemias in chickens. It is a truncated and mutated version of the receptor for epidermal growth factor. This is Tyrosine-protein kinase transforming protein erbB (V-ERBB) from Galliformes.